Reading from the N-terminus, the 491-residue chain is MDTKGCTTTNSPSTPCQNCSRITNVSTISSNNGCHPGGLTVNNCQPAGHVLRIPWDQGCQPTPRFCRKPIYLMNNFNARFSLDDCSWYGEGINSNEKETMQILNERLANYLQKVRMLERENAELESKIQEESNKELPVLCPDYLSYYTTIEELQQKILCTKAENSRLVSQIDNTKLTADDLRAKYEAEVSLRQLVESDANGLKQILNVLTLGKADLEAQVQSLKEELLCLKNNHKEEINSLQCQLGERLDIEVTAAPSADLNQVLQEMRCQYEPIMETNRKDVEQWFNTQIEELNQQVVTSSQQQQCCQKEIIELRRSVNTLEVELQAQHRMRDSQECILTETEARYTALLTQIQSLIDNLEAQLAEIRCALERQNQEYEILLDVKSRLECEITTYRSLLESSDGKRPCYPRATKCEPSPWTSCKSGAIESTAPACTSSSPCSLKEHCSACGPLSRILVKICTITKEIKDGKVISSYEHVQPCFIIRPAKV.

The tract at residues 1–96 (MDTKGCTTTN…WYGEGINSNE (96 aa)) is head. In terms of domain architecture, IF rod spans 96-407 (EKETMQILNE…SLLESSDGKR (312 aa)). Positions 97-131 (KETMQILNERLANYLQKVRMLERENAELESKIQEE) are coil 1A. The segment at 132–142 (SNKELPVLCPD) is linker 1. A coil 1B region spans residues 143–243 (YLSYYTTIEE…HKEEINSLQC (101 aa)). The interval 244 to 259 (QLGERLDIEVTAAPSA) is linker 12. Residues 260–403 (DLNQVLQEMR…TTYRSLLESS (144 aa)) form a coil 2 region. Residues 404 to 491 (DGKRPCYPRA…PCFIIRPAKV (88 aa)) are tail.

The protein belongs to the intermediate filament family. In terms of assembly, heterotetramer of two type I and two type II keratins. In terms of tissue distribution, expressed in skin and scalp. In the hair follicle, it is present in the upper hair cuticle and the upper cortex. Also present in the in the upper portion of beard hairs (at protein level).

Its function is as follows. May play a role in late hair differentiation. This is Keratin, type I cytoskeletal 39 (KRT39) from Homo sapiens (Human).